Consider the following 206-residue polypeptide: MRPLTPRQAEILELIKRNISDTGMPPTRAEIARRLGFKSANAAEEHLKALAKKGCIEIIPGTSRGIRLTQEEPEEVELGLPLIGQVAAGEPILAQEHVEQHYKVDPAMFRPSADFLLRVRGDSMKDIGILEGDLLAVHKSQQARNGQVVVARVEDDVTVKRFEKKGNKVFLHAENEEYSPIEVDLANQSLSIEGLAVGVIRNGDWQ.

The segment at residues 28 to 48 is a DNA-binding region (H-T-H motif); that stretch reads RAEIARRLGFKSANAAEEHLK. Catalysis depends on for autocatalytic cleavage activity residues Ser123 and Lys160.

The protein belongs to the peptidase S24 family. Homodimer.

It catalyses the reaction Hydrolysis of Ala-|-Gly bond in repressor LexA.. Represses a number of genes involved in the response to DNA damage (SOS response), including recA and lexA. In the presence of single-stranded DNA, RecA interacts with LexA causing an autocatalytic cleavage which disrupts the DNA-binding part of LexA, leading to derepression of the SOS regulon and eventually DNA repair. The chain is LexA repressor from Shewanella piezotolerans (strain WP3 / JCM 13877).